The sequence spans 453 residues: Cysteine--tRNA ligase (453 aa).

C31 serves as a coordination point for Zn(2+). Residues 33 to 43 carry the 'HIGH' region motif; that stretch reads PTVYDNPHIGN. 3 residues coordinate Zn(2+): C213, H238, and E242. Positions 271 to 275 match the 'KMSKS' region motif; that stretch reads KMAKS. K274 provides a ligand contact to ATP.

The protein belongs to the class-I aminoacyl-tRNA synthetase family. In terms of assembly, monomer. Zn(2+) is required as a cofactor.

Its subcellular location is the cytoplasm. The catalysed reaction is tRNA(Cys) + L-cysteine + ATP = L-cysteinyl-tRNA(Cys) + AMP + diphosphate. The polypeptide is Cysteine--tRNA ligase (Pelagibacter ubique (strain HTCC1062)).